A 122-amino-acid chain; its full sequence is Serum amyloid A-3 protein (122 aa).

Positions Met-1 to Ser-18 are cleaved as a signal peptide. The tract at residues Gly-88–Tyr-122 is disordered. The span at Glu-99 to Asp-109 shows a compositional bias: polar residues.

Belongs to the SAA family. As to expression, expressed by the liver; secreted in plasma. Expressed in synovial fibroblasts.

Its subcellular location is the secreted. In terms of biological role, major acute phase reactant. Apolipoprotein of the HDL complex. In vitro exhibits antimicrobial activity against Escherichia coli, Streptococcus uberis and Pseudomonas aeruginosa. The protein is Serum amyloid A-3 protein (SAA3) of Oryctolagus cuniculus (Rabbit).